Here is a 362-residue protein sequence, read N- to C-terminus: Peptide chain release factor 1 (362 aa).

N5-methylglutamine is present on Gln237. The disordered stretch occupies residues 289-308 (AAEISDTRRNLLGSGDRSDR).

The protein belongs to the prokaryotic/mitochondrial release factor family. Post-translationally, methylated by PrmC. Methylation increases the termination efficiency of RF1.

The protein localises to the cytoplasm. Its function is as follows. Peptide chain release factor 1 directs the termination of translation in response to the peptide chain termination codons UAG and UAA. In Vibrio cholerae serotype O1 (strain ATCC 39541 / Classical Ogawa 395 / O395), this protein is Peptide chain release factor 1.